We begin with the raw amino-acid sequence, 358 residues long: RNA demethylase ALKBH5 (358 aa).

Positions 1–50 (MSATYTDLREKLQSLYRDSPKEVRKRKQPTSDTEEEEAASEPEEEEEARK) are disordered. The span at 7–22 (DLREKLQSLYRDSPKE) shows a compositional bias: basic and acidic residues. Residues 32–46 (DTEEEEAASEPEEEE) show a composition bias toward acidic residues. Tyrosine 105 is a catalytic residue. 2-oxoglutarate contacts are provided by asparagine 159, tyrosine 161, histidine 170, histidine 232, and arginine 243. The cysteines at positions 196 and 233 are disulfide-linked. Disordered regions lie at residues 259–312 (EMKS…RRSV) and 334–358 (DYVDTYTETGEDDGSPVRKVKMRRH). Positions 262 to 278 (SLSSSYQPERLQGSNRQ) are enriched in polar residues. Basic residues predominate over residues 279-288 (HILKPKRSHR). Residues 289–310 (KADPDAAHRPRILEMDKEENRR) are compositionally biased toward basic and acidic residues.

The protein belongs to the alkB family. Monomer. The cofactor is Fe(2+).

Its subcellular location is the nucleus speckle. The enzyme catalyses an N(6)-methyladenosine in mRNA + 2-oxoglutarate + O2 = an adenosine in mRNA + formaldehyde + succinate + CO2. Functionally, dioxygenase that specifically demethylates N(6)-methyladenosine (m6A) RNA, the most prevalent internal modification of messenger RNA (mRNA) in higher eukaryotes. Demethylates RNA by oxidative demethylation, which requires molecular oxygen, alpha-ketoglutarate and iron. Demethylation of m6A mRNA affects mRNA processing, translation and export. The chain is RNA demethylase ALKBH5 (alkbh5) from Xenopus tropicalis (Western clawed frog).